Consider the following 183-residue polypeptide: ATP synthase subunit delta (183 aa).

The protein belongs to the ATPase delta chain family. In terms of assembly, F-type ATPases have 2 components, F(1) - the catalytic core - and F(0) - the membrane proton channel. F(1) has five subunits: alpha(3), beta(3), gamma(1), delta(1), epsilon(1). F(0) has three main subunits: a(1), b(2) and c(10-14). The alpha and beta chains form an alternating ring which encloses part of the gamma chain. F(1) is attached to F(0) by a central stalk formed by the gamma and epsilon chains, while a peripheral stalk is formed by the delta and b chains.

It is found in the cell inner membrane. In terms of biological role, f(1)F(0) ATP synthase produces ATP from ADP in the presence of a proton or sodium gradient. F-type ATPases consist of two structural domains, F(1) containing the extramembraneous catalytic core and F(0) containing the membrane proton channel, linked together by a central stalk and a peripheral stalk. During catalysis, ATP synthesis in the catalytic domain of F(1) is coupled via a rotary mechanism of the central stalk subunits to proton translocation. This protein is part of the stalk that links CF(0) to CF(1). It either transmits conformational changes from CF(0) to CF(1) or is implicated in proton conduction. The protein is ATP synthase subunit delta of Thermotoga maritima (strain ATCC 43589 / DSM 3109 / JCM 10099 / NBRC 100826 / MSB8).